We begin with the raw amino-acid sequence, 477 residues long: RNA pseudouridine synthase 4, mitochondrial (477 aa).

The transit peptide at 1 to 43 (MAKWRLATATLRRQLQSSSPTISTFKNPTKALSAAAHQSTRSY) directs the protein to the mitochondrion. Positions 34–55 (AAAHQSTRSYSTTQTDDSRGKW) are disordered. Positions 36–48 (AHQSTRSYSTTQT) are enriched in polar residues. Positions 90–175 (TTALRWILRC…AKKESFQCSD (86 aa)) constitute an S4 RNA-binding domain. Asp-236 is an active-site residue.

This sequence belongs to the pseudouridine synthase RluA family.

The protein localises to the mitochondrion. It catalyses the reaction a uridine in RNA = a pseudouridine in RNA. This chain is RNA pseudouridine synthase 4, mitochondrial, found in Arabidopsis thaliana (Mouse-ear cress).